Consider the following 68-residue polypeptide: Beta-defensin 1 (68 aa).

Residues 1–21 form the signal peptide; that stretch reads MRTSYLLLFTLCLLLSEIASG. The propeptide occupies 22 to 32; sequence GNFLTGLGHRS. Intrachain disulfides connect C37–C66, C44–C59, and C49–C67.

This sequence belongs to the beta-defensin family. As to quaternary structure, monomer. Homodimer.

The protein localises to the secreted. The protein resides in the membrane. Functionally, has bactericidal activity. May act as a ligand for C-C chemokine receptor CCR6. Positively regulates the sperm motility and bactericidal activity in a CCR6-dependent manner. Binds to CCR6 and triggers Ca2+ mobilization in the sperm which is important for its motility. This Gorilla gorilla gorilla (Western lowland gorilla) protein is Beta-defensin 1 (DEFB1).